The sequence spans 128 residues: Ribosome-binding factor A (128 aa).

The protein belongs to the RbfA family. Monomer. Binds 30S ribosomal subunits, but not 50S ribosomal subunits or 70S ribosomes.

The protein resides in the cytoplasm. In terms of biological role, one of several proteins that assist in the late maturation steps of the functional core of the 30S ribosomal subunit. Associates with free 30S ribosomal subunits (but not with 30S subunits that are part of 70S ribosomes or polysomes). Required for efficient processing of 16S rRNA. May interact with the 5'-terminal helix region of 16S rRNA. The protein is Ribosome-binding factor A of Herminiimonas arsenicoxydans.